The following is a 499-amino-acid chain: Cytochrome P450 77A1 (499 aa).

Cys-443 contacts heme.

This sequence belongs to the cytochrome P450 family. Heme serves as cofactor.

In Solanum melongena (Eggplant), this protein is Cytochrome P450 77A1 (CYP77A1).